A 78-amino-acid chain; its full sequence is Acyl carrier protein (78 aa).

In terms of domain architecture, Carrier spans 2-77 (SDIAERVKKI…DAVKFIEKAQ (76 aa)). Serine 37 carries the post-translational modification O-(pantetheine 4'-phosphoryl)serine.

It belongs to the acyl carrier protein (ACP) family. 4'-phosphopantetheine is transferred from CoA to a specific serine of apo-ACP by AcpS. This modification is essential for activity because fatty acids are bound in thioester linkage to the sulfhydryl of the prosthetic group.

The protein resides in the cytoplasm. Its pathway is lipid metabolism; fatty acid biosynthesis. Its function is as follows. Carrier of the growing fatty acid chain in fatty acid biosynthesis. The protein is Acyl carrier protein of Sinorhizobium fredii (strain NBRC 101917 / NGR234).